The primary structure comprises 100 residues: Urease subunit gamma (100 aa).

The protein belongs to the urease gamma subunit family. Heterotrimer of UreA (gamma), UreB (beta) and UreC (alpha) subunits. Three heterotrimers associate to form the active enzyme.

It localises to the cytoplasm. It carries out the reaction urea + 2 H2O + H(+) = hydrogencarbonate + 2 NH4(+). It functions in the pathway nitrogen metabolism; urea degradation; CO(2) and NH(3) from urea (urease route): step 1/1. The protein is Urease subunit gamma of Paraburkholderia xenovorans (strain LB400).